Here is a 276-residue protein sequence, read N- to C-terminus: Protein MGF 360-15R (276 aa).

It belongs to the asfivirus MGF 360 family.

Plays a role in virus cell tropism, and may be required for efficient virus replication in macrophages. The protein is Protein MGF 360-15R of Ornithodoros (relapsing fever ticks).